The following is a 334-amino-acid chain: UPF0104 membrane protein MTH_378 (334 aa).

The next 8 helical transmembrane spans lie at 7 to 27 (FYFFALSILLILALIIWMGPS), 33 to 53 (VYMADWMIIAIALLIHMGVLA), 120 to 140 (FFDLGIGGGLLLLAAVMVPVI), 142 to 162 (VIALFGAILSVLITYLIYLVN), 218 to 238 (VIFILSLLSWLMECLRLYLVF), 247 to 267 (FSAVIIIFLLANLVGILSALP), 277 to 297 (MAGLFVVFGVPGFLAGSIALV), and 300 to 320 (IISFWMVTALGAIFSSCYAGE).

Belongs to the UPF0104 family.

It localises to the cell membrane. This chain is UPF0104 membrane protein MTH_378, found in Methanothermobacter thermautotrophicus (strain ATCC 29096 / DSM 1053 / JCM 10044 / NBRC 100330 / Delta H) (Methanobacterium thermoautotrophicum).